The sequence spans 431 residues: Evolutionarily conserved signaling intermediate in Toll pathway, mitochondrial (431 aa).

The N-terminal 48 residues, 1 to 48 (MSWVQATLLARGLCRAWGGTCGAALTGTSISQVPRRLPRGLHCSAAAH), are a transit peptide targeting the mitochondrion. Residue Lys-372 forms a Glycyl lysine isopeptide (Lys-Gly) (interchain with G-Cter in ubiquitin) linkage. Residues 400–431 (LQTSSAGLEEPPLPEDHQEEDDNLQRQQQGQS) are disordered.

Belongs to the ECSIT family. As to quaternary structure, interacts with MAP3K1, SMAD4 and TRAF6. Interacts with SMAD1 only after BMP4-treatment. Part of the mitochondrial complex I assembly/MCIA complex that comprises at least the core subunits TMEM126B, NDUFAF1, ECSIT and ACAD9 and complement subunits such as COA1 and TMEM186. Interacts with NDUFAF1. Interacts with ACAD9. Interacts with TRIM59. Interacts with TMEM70 and TMEM242. Interacts (when ubiquitinated) with NF-kappa-B subunits RELA and NFKB1. Interacts with RIGI, IFIT1 and MAVS; these interactions promote RLR-mediated type I IFN induction. Interacts with SQSTM1; this interaction inhibits TLR4 signaling via functional regulation of the TRAF6-ECSIT complex. Interacts with cereblon/CRBN; this interaction inhibits the ubiquitination of ECSIT. In terms of processing, ubiquitinated on Lys-372; leading to translocation in the nucleus together with RELA and NFKB1 and expression of NF-kappa-B-dependent genes.

The protein resides in the cytoplasm. The protein localises to the nucleus. Its subcellular location is the mitochondrion. Adapter protein that plays a role in different signaling pathways including TLRs and IL-1 pathways or innate antiviral induction signaling. Plays a role in the activation of NF-kappa-B by forming a signal complex with TRAF6 and TAK1/MAP3K7 to activate TAK1/MAP3K7 leading to activation of IKKs. Once ubiquitinated, interacts with the dissociated RELA and NFKB1 proteins and translocates to the nucleus where it induces NF-kappa-B-dependent gene expression. Plays a role in innate antiviral immune response by bridging the pattern recognition receptors RIGI and MDA5/IFIT1 to the MAVS complex at the mitochondrion. Promotes proteolytic activation of MAP3K1. Involved in the BMP signaling pathway. Required for normal embryonic development. Its function is as follows. As part of the MCIA complex, involved in the assembly of the mitochondrial complex I. The protein is Evolutionarily conserved signaling intermediate in Toll pathway, mitochondrial of Homo sapiens (Human).